The chain runs to 251 residues: 3-deoxy-manno-octulosonate cytidylyltransferase (251 aa).

The protein belongs to the KdsB family.

The protein resides in the cytoplasm. The catalysed reaction is 3-deoxy-alpha-D-manno-oct-2-ulosonate + CTP = CMP-3-deoxy-beta-D-manno-octulosonate + diphosphate. Its pathway is nucleotide-sugar biosynthesis; CMP-3-deoxy-D-manno-octulosonate biosynthesis; CMP-3-deoxy-D-manno-octulosonate from 3-deoxy-D-manno-octulosonate and CTP: step 1/1. It functions in the pathway bacterial outer membrane biogenesis; lipopolysaccharide biosynthesis. Activates KDO (a required 8-carbon sugar) for incorporation into bacterial lipopolysaccharide in Gram-negative bacteria. This chain is 3-deoxy-manno-octulosonate cytidylyltransferase, found in Chlorobium luteolum (strain DSM 273 / BCRC 81028 / 2530) (Pelodictyon luteolum).